Here is a 139-residue protein sequence, read N- to C-terminus: GSK3B-interacting protein (139 aa).

Residues V41–L45 are required for PRKAR2A interaction; contributes to a protective effect against H(2)O(2)-induced apoptosis. Residues S115–S139 are interaction with GSK3B and acts as a GSK3B inhibitor.

The protein belongs to the GSKIP family. Forms a complex composed of PRKAR2A or PRKAR2B, GSK3B and GSKIP through GSKIP interaction; facilitates PKA-induced phosphorylation of GSK3B leading to GSK3B inactivation; recruits DNM1L through GSK3B for PKA-mediated phosphorylation of DNM1L; promotes beta-catenin degradation through GSK3B-induced phosphorylation of beta-catenin; stabilizes beta-catenin and enhances Wnt-induced signaling through PKA-induced phosphorylation of beta-catenin. Interacts with GSK3B; induces GSK3B-mediated phosphorylation of GSKIP and inhibits GSK3B kinase activity. Phosphorylated by GSK3B.

The protein localises to the cytoplasm. Its subcellular location is the nucleus. Its function is as follows. A-kinase anchoring protein for GSK3B and PKA that regulates or facilitates their kinase activity towards their targets. The ternary complex enhances Wnt-induced signaling by facilitating the GSK3B- and PKA-induced phosphorylation of beta-catenin leading to beta-catenin degradation and stabilization respectively. Upon cAMP activation, the ternary complex contributes to neuroprotection against oxidative stress-induced apoptosis by facilitating the PKA-induced phosphorylation of DML1 and PKA-induced inactivation of GSK3B. During neurite outgrowth promotes neuron proliferation; while increases beta-catenin-induced transcriptional activity through GSK3B kinase activity inhibition, reduces N-cadherin level to promote cell cycle progression. May play a role in cleft palate formation and is required for postnatal life through modulation of the activity of GSK3B during development. The protein is GSK3B-interacting protein of Bos taurus (Bovine).